Reading from the N-terminus, the 179-residue chain is Tegument protein UL55 homolog (179 aa).

Belongs to the alphaherpesvirinae HHV-1 UL55 family.

The protein localises to the virion tegument. Its subcellular location is the host nucleus matrix. The protein is Tegument protein UL55 homolog of Homo sapiens (Human).